The following is a 490-amino-acid chain: Protein dead ringer homolog (490 aa).

Basic and acidic residues predominate over residues methionine 1–arginine 33. Disordered stretches follow at residues methionine 1 to aspartate 77 and isoleucine 106 to serine 135. A compositionally biased stretch (acidic residues) spans aspartate 34 to glutamate 50. Positions aspartate 51–isoleucine 76 are enriched in basic and acidic residues. A compositionally biased stretch (polar residues) spans isoleucine 106–asparagine 117. Positions aspartate 202–lysine 294 constitute an ARID domain. A disordered region spans residues serine 298–proline 369. The span at proline 316–proline 325 shows a compositional bias: basic residues. An REKLES domain is found at alanine 389–arginine 479.

The protein localises to the nucleus. In terms of biological role, transcription factor involved in skeletogenesis and oral ectoderm patterning. In Strongylocentrotus purpuratus (Purple sea urchin), this protein is Protein dead ringer homolog (dri).